A 430-amino-acid polypeptide reads, in one-letter code: Glutamate-1-semialdehyde 2,1-aminomutase (430 aa).

At Lys-265 the chain carries N6-(pyridoxal phosphate)lysine.

Belongs to the class-III pyridoxal-phosphate-dependent aminotransferase family. HemL subfamily. As to quaternary structure, homodimer. The cofactor is pyridoxal 5'-phosphate.

It localises to the cytoplasm. The enzyme catalyses (S)-4-amino-5-oxopentanoate = 5-aminolevulinate. Its pathway is porphyrin-containing compound metabolism; protoporphyrin-IX biosynthesis; 5-aminolevulinate from L-glutamyl-tRNA(Glu): step 2/2. In Shewanella baltica (strain OS195), this protein is Glutamate-1-semialdehyde 2,1-aminomutase.